A 327-amino-acid polypeptide reads, in one-letter code: Lipoyl synthase (327 aa).

Residues C72, C77, C83, C98, C102, C105, and S313 each contribute to the [4Fe-4S] cluster site. The Radical SAM core domain occupies 83-302; sequence CWSHGTATIM…RKVGLEKGFL (220 aa).

The protein belongs to the radical SAM superfamily. Lipoyl synthase family. It depends on [4Fe-4S] cluster as a cofactor.

It is found in the cytoplasm. The enzyme catalyses [[Fe-S] cluster scaffold protein carrying a second [4Fe-4S](2+) cluster] + N(6)-octanoyl-L-lysyl-[protein] + 2 oxidized [2Fe-2S]-[ferredoxin] + 2 S-adenosyl-L-methionine + 4 H(+) = [[Fe-S] cluster scaffold protein] + N(6)-[(R)-dihydrolipoyl]-L-lysyl-[protein] + 4 Fe(3+) + 2 hydrogen sulfide + 2 5'-deoxyadenosine + 2 L-methionine + 2 reduced [2Fe-2S]-[ferredoxin]. Its pathway is protein modification; protein lipoylation via endogenous pathway; protein N(6)-(lipoyl)lysine from octanoyl-[acyl-carrier-protein]: step 2/2. Its function is as follows. Catalyzes the radical-mediated insertion of two sulfur atoms into the C-6 and C-8 positions of the octanoyl moiety bound to the lipoyl domains of lipoate-dependent enzymes, thereby converting the octanoylated domains into lipoylated derivatives. The protein is Lipoyl synthase of Francisella tularensis subsp. mediasiatica (strain FSC147).